The following is a 150-amino-acid chain: Large ribosomal subunit protein bL9 (150 aa).

The protein belongs to the bacterial ribosomal protein bL9 family.

Its function is as follows. Binds to the 23S rRNA. The sequence is that of Large ribosomal subunit protein bL9 from Sodalis glossinidius (strain morsitans).